A 1887-amino-acid polypeptide reads, in one-letter code: Fatty acid synthase subunit alpha (1887 aa).

Lys37 participates in a covalent cross-link: Glycyl lysine isopeptide (Lys-Gly) (interchain with G-Cter in ubiquitin). The residue at position 50 (Ser50) is a Phosphoserine. A disordered region spans residues 96–120 (ELAAKEEPAKEEAPAPTPAASAPAP). The span at 98-108 (AAKEEPAKEEA) shows a compositional bias: basic and acidic residues. The region spanning 145–220 (VKASLLLHVL…ETFQDTFSGA (76 aa)) is the Carrier domain. Ser180 bears the O-(pantetheine 4'-phosphoryl)serine mark. The residue at position 523 (Ser523) is a Phosphoserine. Residues 675–874 (DKYVLITGAG…CGAIIGWTRG (200 aa)) are beta-ketoacyl reductase. Ser958 carries the phosphoserine modification. One can recognise a Ketosynthase family 3 (KS3) domain in the interval 1123 to 1657 (QEVIVEEDLE…QKGGQAIVVH (535 aa)). Cys1305 (for beta-ketoacyl synthase activity) is an active-site residue. At Ser1440 the chain carries Phosphoserine. Residues His1542 and His1583 each act as for beta-ketoacyl synthase activity in the active site. Mg(2+) is bound by residues Asp1772, Val1773, and Glu1774. Acetyl-CoA is bound by residues 1772–1774 (DVE), Tyr1798, Ser1808, 1817–1827 (EAVFKSLGVKS), 1841–1844 (RVNK), and 1871–1873 (ISH). The Mg(2+) site is built by Ser1872 and His1873.

The protein belongs to the thiolase-like superfamily. Fungal fatty acid synthetase subunit alpha family. In terms of assembly, [Alpha(6)beta(6)] hexamers of two multifunctional subunits (alpha and beta). Post-translationally, 4'-phosphopantetheine is transferred from CoA to a specific serine of the Acyl carrier domain by the C-terminal PPT domain. This modification is essential for activity because fatty acids are bound in thioester linkage to the sulfhydryl of the prosthetic group.

The catalysed reaction is acetyl-CoA + n malonyl-CoA + 2n NADPH + 4n H(+) = a long-chain-acyl-CoA + n CoA + n CO2 + 2n NADP(+).. It carries out the reaction a fatty acyl-[ACP] + malonyl-[ACP] + H(+) = a 3-oxoacyl-[ACP] + holo-[ACP] + CO2. It catalyses the reaction a (3R)-hydroxyacyl-[ACP] + NADP(+) = a 3-oxoacyl-[ACP] + NADPH + H(+). Its activity is regulated as follows. Inhibited by cerulenin by covalent binding to active site of the ketoacyl synthase (KS) region. Its function is as follows. Fatty acid synthetase catalyzes the formation of long-chain fatty acids from acetyl-CoA, malonyl-CoA and NADPH. The alpha subunit contains domains for: acyl carrier protein, 3-oxoacyl-[acyl-carrier-protein] reductase, and 3-oxoacyl-[acyl-carrier-protein] synthase. This subunit coordinates the binding of the six beta subunits to the enzyme complex. The protein is Fatty acid synthase subunit alpha (FAS2) of Saccharomyces cerevisiae (strain ATCC 204508 / S288c) (Baker's yeast).